The chain runs to 212 residues: Protein-L-isoaspartate O-methyltransferase (212 aa).

The active site involves Ser-60.

This sequence belongs to the methyltransferase superfamily. L-isoaspartyl/D-aspartyl protein methyltransferase family.

The protein resides in the cytoplasm. The enzyme catalyses [protein]-L-isoaspartate + S-adenosyl-L-methionine = [protein]-L-isoaspartate alpha-methyl ester + S-adenosyl-L-homocysteine. Catalyzes the methyl esterification of L-isoaspartyl residues in peptides and proteins that result from spontaneous decomposition of normal L-aspartyl and L-asparaginyl residues. It plays a role in the repair and/or degradation of damaged proteins. The sequence is that of Protein-L-isoaspartate O-methyltransferase from Methanococcus maripaludis (strain C5 / ATCC BAA-1333).